Consider the following 813-residue polypeptide: Lon protease (813 aa).

A Lon N-terminal domain is found at 14–207 (LPLLPLRGII…ILTEILAREM (194 aa)). An ATP-binding site is contributed by 359 to 366 (GPPGVGKT). The region spanning 595–776 (ESQVGVATGL…DQVIREALLE (182 aa)) is the Lon proteolytic domain. Residues serine 682 and lysine 725 contribute to the active site.

It belongs to the peptidase S16 family. As to quaternary structure, homohexamer. Organized in a ring with a central cavity.

It localises to the cytoplasm. The catalysed reaction is Hydrolysis of proteins in presence of ATP.. Functionally, ATP-dependent serine protease that mediates the selective degradation of mutant and abnormal proteins as well as certain short-lived regulatory proteins. Required for cellular homeostasis and for survival from DNA damage and developmental changes induced by stress. Degrades polypeptides processively to yield small peptide fragments that are 5 to 10 amino acids long. Binds to DNA in a double-stranded, site-specific manner. This chain is Lon protease, found in Heliobacterium modesticaldum (strain ATCC 51547 / Ice1).